The following is a 265-amino-acid chain: Synaptoporin (265 aa).

Residues 1-4 (MCMV) are Cytoplasmic-facing. Residues 1 to 202 (MCMVIFAPLF…NIWFVFKETG (202 aa)) enclose the MARVEL domain. The chain crosses the membrane as a helical span at residues 5-25 (IFAPLFAIFAFATCGGYSGGL). The Vesicular portion of the chain corresponds to 26–81 (RLSVDCVNKTESNLSIDIAFAYPFRLHQVTFEVPTCEGKERQKLALVGDSSSSAEF). N-linked (GlcNAc...) asparagine glycosylation is found at Asn33 and Asn38. The helical transmembrane segment at 82–102 (FVTVAVFAFLYSLAATVVYIF) threads the bilayer. Residues 103–114 (FQNKYRENNRGP) are Cytoplasmic-facing. The chain crosses the membrane as a helical span at residues 115-135 (LIDFIVTVVFSFLWLVGSSAW). Over 136–177 (AKGLSDVKVATDPKEVLLLMSACKQPSNKCMAVHSPVMSSLN) the chain is Vesicular. N-linked (GlcNAc...) asparagine glycosylation occurs at Asn177. Residues 178–198 (TSVVFGFLNFILWAGNIWFVF) traverse the membrane as a helical segment. Residues 199–265 (KETGWHSSGQ…SGPTSFNNQI (67 aa)) lie on the Cytoplasmic side of the membrane. Repeat unit 1 spans residues 210-214 (YLSDP). Residues 210 to 242 (YLSDPMEKHSSSYNQGGYNQDSYGSSGGYSQQA) form a 5 X approximate repeats region. Ser212 and Ser220 each carry phosphoserine. Positions 221–265 (SYNQGGYNQDSYGSSGGYSQQASLGPTSDEFGQQPSGPTSFNNQI) are disordered. 4 consecutive repeat copies span residues 222–226 (YNQGG), 227–231 (YNQDS), 232–236 (YGSSG), and 238–242 (YSQQA). Residues 224 to 243 (QGGYNQDSYGSSGGYSQQAS) are compositionally biased toward low complexity. A compositionally biased stretch (polar residues) spans 244-265 (LGPTSDEFGQQPSGPTSFNNQI).

This sequence belongs to the synaptophysin/synaptobrevin family. In terms of tissue distribution, central nervous system.

It is found in the cytoplasmic vesicle. Its subcellular location is the secretory vesicle. The protein localises to the synaptic vesicle membrane. The protein resides in the synapse. It localises to the synaptosome. In terms of biological role, intrinsic membrane protein of small synaptic vesicles. Probable vesicular channel protein. This Rattus norvegicus (Rat) protein is Synaptoporin (Synpr).